The following is a 444-amino-acid chain: Adenylosuccinate synthetase (444 aa).

GTP is bound by residues 12 to 18 (GDEGKGK) and 40 to 42 (GHT). The active-site Proton acceptor is Asp-13. Residues Asp-13 and Gly-40 each contribute to the Mg(2+) site. IMP is bound by residues 13–16 (DEGK), 38–41 (NAGH), Thr-128, Arg-142, Gln-223, Thr-238, and Arg-302. His-41 serves as the catalytic Proton donor. 298-304 (TTTGRRR) serves as a coordination point for substrate. GTP is bound by residues Arg-304, 330–332 (KLD), and 412–414 (SLG).

This sequence belongs to the adenylosuccinate synthetase family. As to quaternary structure, homodimer. The cofactor is Mg(2+).

It is found in the cytoplasm. The enzyme catalyses IMP + L-aspartate + GTP = N(6)-(1,2-dicarboxyethyl)-AMP + GDP + phosphate + 2 H(+). It participates in purine metabolism; AMP biosynthesis via de novo pathway; AMP from IMP: step 1/2. Its function is as follows. Plays an important role in the de novo pathway of purine nucleotide biosynthesis. Catalyzes the first committed step in the biosynthesis of AMP from IMP. This Synechococcus sp. (strain ATCC 27144 / PCC 6301 / SAUG 1402/1) (Anacystis nidulans) protein is Adenylosuccinate synthetase.